Consider the following 508-residue polypeptide: MGLPWYRVHTVVLNDPGRLIAVHIMHTALVAGWAGSMALYELAVFDPSDSVLDPMWRQGMFILPFMTRLGIKESWGGWSITGEPIANPGLWSYEGVAGAHIVFSGLCFLSATWHWVYWDLEIFSDPRTGKPSLDLPKIFGIHLFLSGVACFGFGAFHVTGLYGPGIWVSDPFGLTGKIQPVSPAWGAEGFDPFVPGGIASHHVAAGLLGIIAGLFHLSVRPPQRLYRGLRMGNIETVLSSSIAAVFFAAFIVAGTMWYGSATTPIELFGPTRYQWDQGYFQQEIDRRVQAGLAENLSLSEAWSRIPEKLAFYDYIGNNPAKGGLFRAGAMDNGDGIAVGWLGHPIFKDKEGNELFVRRMPTFFETFPVVLVDKEGVIKADIPFRRAESKYSVEQVGVTVEFYGGELNGVSFSDPAIVKKYARRAQLGEIFELDRATLKSDGVFRSSPRGWFTFGHATFALLFFFGHIWHGARTLFRDIFAGIDPELDIQVEFGAFQKIGDPTTKRQVV.

6 consecutive transmembrane segments (helical) span residues Ala21–Ser36, Ile101–Trp115, Gly140–Phe156, Val203–Ser218, Val237–Val252, and Thr457–Arg472.

It belongs to the PsbB/PsbC family. PsbB subfamily. As to quaternary structure, PSII is composed of 1 copy each of membrane proteins PsbA, PsbB, PsbC, PsbD, PsbE, PsbF, PsbH, PsbI, PsbJ, PsbK, PsbL, PsbM, PsbT, PsbX, PsbY, PsbZ, Psb30/Ycf12, at least 3 peripheral proteins of the oxygen-evolving complex and a large number of cofactors. It forms dimeric complexes. Requires Binds multiple chlorophylls. PSII binds additional chlorophylls, carotenoids and specific lipids. as cofactor.

It localises to the plastid. The protein resides in the chloroplast thylakoid membrane. In terms of biological role, one of the components of the core complex of photosystem II (PSII). It binds chlorophyll and helps catalyze the primary light-induced photochemical processes of PSII. PSII is a light-driven water:plastoquinone oxidoreductase, using light energy to abstract electrons from H(2)O, generating O(2) and a proton gradient subsequently used for ATP formation. This chain is Photosystem II CP47 reaction center protein, found in Welwitschia mirabilis (Tree tumbo).